The chain runs to 410 residues: 23S rRNA (uracil(747)-C(5))-methyltransferase (410 aa).

C61, C67, C70, and C137 together coordinate [4Fe-4S] cluster. S-adenosyl-L-methionine contacts are provided by Q253, Y279, E300, and D341. C367 acts as the Nucleophile in catalysis.

The protein belongs to the class I-like SAM-binding methyltransferase superfamily. RNA M5U methyltransferase family.

It catalyses the reaction uridine(747) in 23S rRNA + S-adenosyl-L-methionine = 5-methyluridine(747) in 23S rRNA + S-adenosyl-L-homocysteine + H(+). With respect to regulation, activated by magnesium ions. In terms of biological role, catalyzes the formation of 5-methyl-uridine at position equivalent to 747 (m5U747) in 23S rRNA (m5U859 in the P.abyssi numbering). This is 23S rRNA (uracil(747)-C(5))-methyltransferase from Pyrococcus abyssi (strain GE5 / Orsay).